The primary structure comprises 108 residues: UPF0060 membrane protein amb3269 (108 aa).

4 helical membrane-spanning segments follow: residues 4 to 24 (IPTYILAAFAEIGGCFAFWAW), 31 to 51 (PLWLVPGMASLGLFAWALTRI), 59 to 79 (AYAAYGGIYILASLIWMWAVE), and 85 to 105 (RWDTIGAAICVVGAMVIIFGP).

The protein belongs to the UPF0060 family.

Its subcellular location is the cell inner membrane. The protein is UPF0060 membrane protein amb3269 of Paramagnetospirillum magneticum (strain ATCC 700264 / AMB-1) (Magnetospirillum magneticum).